The sequence spans 202 residues: Matrix protein (202 aa).

The PPXY motif motif lies at 35–38 (PPEY). The tract at residues 115-151 (KLRRTLIFQWADSRGPLEGEELEYSQEITWDDDTEFV) is essential for glycoprotein binding.

It belongs to the lyssavirus matrix protein family. In terms of assembly, homomultimer. Interacts with nucleoprotein and with the cytoplasmic domain of glycoprotein. Interacts with host ATP6V1A; this interaction plays an important role in virion uncoating after viral entry.

The protein resides in the virion membrane. It localises to the host endomembrane system. It is found in the host cytoplasm. In terms of biological role, plays a major role in assembly, budding and uncoating of virion after membrane fusion. Completely covers the ribonucleoprotein coil and keep it in condensed bullet-shaped form. Inhibits viral transcription and stimulates replication. Plays a major role in early induction of TRAIL-mediated apoptosis in infected neurons. Inhibits the integrated stress response (ISR) in the infected cell by blocking the formation of stress granules. This is Matrix protein (M) from Homo sapiens (Human).